Here is a 180-residue protein sequence, read N- to C-terminus: Crossover junction endodeoxyribonuclease RuvC (180 aa).

Active-site residues include Asp7, Glu66, and Asp138. Residues Asp7, Glu66, and Asp138 each coordinate Mg(2+).

The protein belongs to the RuvC family. As to quaternary structure, homodimer which binds Holliday junction (HJ) DNA. The HJ becomes 2-fold symmetrical on binding to RuvC with unstacked arms; it has a different conformation from HJ DNA in complex with RuvA. In the full resolvosome a probable DNA-RuvA(4)-RuvB(12)-RuvC(2) complex forms which resolves the HJ. Mg(2+) is required as a cofactor.

The protein localises to the cytoplasm. It catalyses the reaction Endonucleolytic cleavage at a junction such as a reciprocal single-stranded crossover between two homologous DNA duplexes (Holliday junction).. The RuvA-RuvB-RuvC complex processes Holliday junction (HJ) DNA during genetic recombination and DNA repair. Endonuclease that resolves HJ intermediates. Cleaves cruciform DNA by making single-stranded nicks across the HJ at symmetrical positions within the homologous arms, yielding a 5'-phosphate and a 3'-hydroxyl group; requires a central core of homology in the junction. The consensus cleavage sequence is 5'-(A/T)TT(C/G)-3'. Cleavage occurs on the 3'-side of the TT dinucleotide at the point of strand exchange. HJ branch migration catalyzed by RuvA-RuvB allows RuvC to scan DNA until it finds its consensus sequence, where it cleaves and resolves the cruciform DNA. The protein is Crossover junction endodeoxyribonuclease RuvC of Burkholderia pseudomallei (strain 1710b).